The following is a 364-amino-acid chain: Valine dehydrogenase (364 aa).

The active site involves K91. 191–197 (GVGKVGH) is a binding site for NAD(+).

Belongs to the Glu/Leu/Phe/Val dehydrogenases family. In terms of assembly, homodimer.

The protein resides in the cytoplasm. It carries out the reaction L-valine + NAD(+) + H2O = 3-methyl-2-oxobutanoate + NH4(+) + NADH + H(+). Its pathway is amino-acid degradation; L-valine degradation. Repressed in minimal medium by the presence of glucose and NH4(+), glycerol and NH4(+), or glycerol and asparagine. Functionally, oxidative deamination of branched-chain amino acids. Oxidizes L-valine and L-alpha-aminobutyric acid efficiently, and L-isoleucine and L-leucine less efficiently. Does not act on D-valine. The catabolism of L-valine is the major source of fatty acid precursors for macrolide biosynthesis and a vital source of antibiotic precursors. Uses NAD; no activity was found with NADP. In Streptomyces coelicolor (strain ATCC BAA-471 / A3(2) / M145), this protein is Valine dehydrogenase (vdh).